A 132-amino-acid chain; its full sequence is NADH-quinone oxidoreductase subunit A 2 (132 aa).

3 helical membrane passes run 9-29 (AWAF…MLGL), 66-86 (LVAM…LWAV), and 93-113 (WAGF…LFYL).

The protein belongs to the complex I subunit 3 family. NDH-1 is composed of 13 different subunits. Subunits NuoA, H, J, K, L, M, N constitute the membrane sector of the complex.

It localises to the cell inner membrane. The enzyme catalyses a quinone + NADH + 5 H(+)(in) = a quinol + NAD(+) + 4 H(+)(out). Its function is as follows. NDH-1 shuttles electrons from NADH, via FMN and iron-sulfur (Fe-S) centers, to quinones in the respiratory chain. The immediate electron acceptor for the enzyme in this species is believed to be ubiquinone. Couples the redox reaction to proton translocation (for every two electrons transferred, four hydrogen ions are translocated across the cytoplasmic membrane), and thus conserves the redox energy in a proton gradient. This Pseudomonas paraeruginosa (strain DSM 24068 / PA7) (Pseudomonas aeruginosa (strain PA7)) protein is NADH-quinone oxidoreductase subunit A 2.